Reading from the N-terminus, the 241-residue chain is Small ribosomal subunit protein uS2 (241 aa).

This sequence belongs to the universal ribosomal protein uS2 family.

In Proteus mirabilis (strain HI4320), this protein is Small ribosomal subunit protein uS2.